The sequence spans 193 residues: ATP-dependent Clp protease proteolytic subunit (193 aa).

Serine 97 functions as the Nucleophile in the catalytic mechanism. The active site involves histidine 122.

The protein belongs to the peptidase S14 family. Fourteen ClpP subunits assemble into 2 heptameric rings which stack back to back to give a disk-like structure with a central cavity, resembling the structure of eukaryotic proteasomes.

The protein localises to the cytoplasm. The enzyme catalyses Hydrolysis of proteins to small peptides in the presence of ATP and magnesium. alpha-casein is the usual test substrate. In the absence of ATP, only oligopeptides shorter than five residues are hydrolyzed (such as succinyl-Leu-Tyr-|-NHMec, and Leu-Tyr-Leu-|-Tyr-Trp, in which cleavage of the -Tyr-|-Leu- and -Tyr-|-Trp bonds also occurs).. Cleaves peptides in various proteins in a process that requires ATP hydrolysis. Has a chymotrypsin-like activity. Plays a major role in the degradation of misfolded proteins. This Fusobacterium nucleatum subsp. nucleatum (strain ATCC 25586 / DSM 15643 / BCRC 10681 / CIP 101130 / JCM 8532 / KCTC 2640 / LMG 13131 / VPI 4355) protein is ATP-dependent Clp protease proteolytic subunit.